A 359-amino-acid polypeptide reads, in one-letter code: Putative B3 domain-containing protein At3g24850 (359 aa).

2 disordered regions span residues 92–111 (DSEIEDPQTSDSQMKTLQNS) and 159–192 (EKMETKDPPNPLSLCLTGNTSRKRRAVEERKRTG). Over residues 100–111 (TSDSQMKTLQNS) the composition is skewed to polar residues. A DNA-binding region (TF-B3) is located at residues 250–351 (FNNLLQNDFL…VLCFAMEQSS (102 aa)).

Its subcellular location is the nucleus. The chain is Putative B3 domain-containing protein At3g24850 from Arabidopsis thaliana (Mouse-ear cress).